The sequence spans 294 residues: uncharacterized protein (294 aa).

This is an uncharacterized protein from Methanocaldococcus jannaschii (strain ATCC 43067 / DSM 2661 / JAL-1 / JCM 10045 / NBRC 100440) (Methanococcus jannaschii).